The sequence spans 577 residues: Arginine--tRNA ligase (577 aa).

The 'HIGH' region motif lies at 122–132; that stretch reads PNVAKEMHVGH.

Belongs to the class-I aminoacyl-tRNA synthetase family. In terms of assembly, monomer.

Its subcellular location is the cytoplasm. The catalysed reaction is tRNA(Arg) + L-arginine + ATP = L-arginyl-tRNA(Arg) + AMP + diphosphate. The chain is Arginine--tRNA ligase from Salmonella arizonae (strain ATCC BAA-731 / CDC346-86 / RSK2980).